The following is a 156-amino-acid chain: Small ribosomal subunit protein uS7 (156 aa).

This sequence belongs to the universal ribosomal protein uS7 family. In terms of assembly, part of the 30S ribosomal subunit. Contacts proteins S9 and S11.

Its function is as follows. One of the primary rRNA binding proteins, it binds directly to 16S rRNA where it nucleates assembly of the head domain of the 30S subunit. Is located at the subunit interface close to the decoding center, probably blocks exit of the E-site tRNA. In Kineococcus radiotolerans (strain ATCC BAA-149 / DSM 14245 / SRS30216), this protein is Small ribosomal subunit protein uS7.